Consider the following 234-residue polypeptide: uncharacterized protein (234 aa).

Transmembrane regions (helical) follow at residues 20–40 (LILL…FKVI) and 176–196 (VMAF…LHFL).

This sequence belongs to the CpsC/CapA family.

It is found in the cell membrane. This is an uncharacterized protein from Bacillus subtilis (strain 168).